The primary structure comprises 732 residues: Catalase-peroxidase (732 aa).

Positions 1-23 (MSEQSRCPVTGRTADSPATGSGL) are disordered. Residues 97 to 220 (WHSAGTYRTS…LAAVQMGLIY (124 aa)) constitute a cross-link (tryptophyl-tyrosyl-methioninium (Trp-Tyr) (with M-246)). The active-site Proton acceptor is the His98. The tryptophyl-tyrosyl-methioninium (Tyr-Met) (with W-97) cross-link spans 220-246 (YVNPEGPDGKPDPVAAGRDIRETFARM). Residue His261 coordinates heme b.

It belongs to the peroxidase family. Peroxidase/catalase subfamily. In terms of assembly, homodimer or homotetramer. It depends on heme b as a cofactor. In terms of processing, formation of the three residue Trp-Tyr-Met cross-link is important for the catalase, but not the peroxidase activity of the enzyme.

It catalyses the reaction H2O2 + AH2 = A + 2 H2O. The catalysed reaction is 2 H2O2 = O2 + 2 H2O. Bifunctional enzyme with both catalase and broad-spectrum peroxidase activity. This is Catalase-peroxidase from Prosthecochloris aestuarii (strain DSM 271 / SK 413).